We begin with the raw amino-acid sequence, 347 residues long: NADH-ubiquinone oxidoreductase chain 2 (347 aa).

A run of 9 helical transmembrane segments spans residues 5–22 (ILAI…MVLI), 26–45 (WLTI…PILM), 60–80 (FLTQ…NLLL), 150–170 (NPNL…WGGL), 178–198 (ILAY…TYNP), 200–220 (LMLL…MLFM), 237–257 (LPLI…LPPL), 274–294 (DMAI…YFYM), and 327–347 (PPLI…LTLF).

This sequence belongs to the complex I subunit 2 family. In terms of assembly, core subunit of respiratory chain NADH dehydrogenase (Complex I) which is composed of 45 different subunits. Interacts with TMEM242.

The protein resides in the mitochondrion inner membrane. The catalysed reaction is a ubiquinone + NADH + 5 H(+)(in) = a ubiquinol + NAD(+) + 4 H(+)(out). Functionally, core subunit of the mitochondrial membrane respiratory chain NADH dehydrogenase (Complex I) which catalyzes electron transfer from NADH through the respiratory chain, using ubiquinone as an electron acceptor. Essential for the catalytic activity and assembly of complex I. The polypeptide is NADH-ubiquinone oxidoreductase chain 2 (Martes zibellina (Sable)).